A 366-amino-acid polypeptide reads, in one-letter code: Peptide chain release factor 1 (366 aa).

N5-methylglutamine is present on Q239.

It belongs to the prokaryotic/mitochondrial release factor family. Methylated by PrmC. Methylation increases the termination efficiency of RF1.

The protein localises to the cytoplasm. Peptide chain release factor 1 directs the termination of translation in response to the peptide chain termination codons UAG and UAA. The chain is Peptide chain release factor 1 from Albidiferax ferrireducens (strain ATCC BAA-621 / DSM 15236 / T118) (Rhodoferax ferrireducens).